The primary structure comprises 449 residues: Glucose-6-phosphate isomerase (449 aa).

Threonine 38 is modified (phosphothreonine). Glutamate 290 serves as the catalytic Proton donor. Catalysis depends on residues histidine 311 and lysine 425.

It belongs to the GPI family.

The protein resides in the cytoplasm. The enzyme catalyses alpha-D-glucose 6-phosphate = beta-D-fructose 6-phosphate. Its pathway is carbohydrate biosynthesis; gluconeogenesis. It functions in the pathway carbohydrate degradation; glycolysis; D-glyceraldehyde 3-phosphate and glycerone phosphate from D-glucose: step 2/4. Catalyzes the reversible isomerization of glucose-6-phosphate to fructose-6-phosphate. The polypeptide is Glucose-6-phosphate isomerase (Geobacillus thermodenitrificans (strain NG80-2)).